Here is a 710-residue protein sequence, read N- to C-terminus: Lactotransferrin (710 aa).

Residues 1 to 19 (MKLVFLVLLFLGALGLCLA) form the signal peptide. A Phosphoserine; alternate modification is found at Phe10. O-linked (GlcNAc) serine; alternate glycosylation occurs at Phe10. The critical for glycosaminoglycan, lipid A, lysozyme and DNA binding stretch occupies residues 20–24 (GRRRS). Bactericidal and antifungal activity stretches follow at residues 20 to 29 (GRRRSVQWCA) and 39 to 49 (FQWQRNMRKVR). An important for full bactericidal and antifungal activities region spans residues 21 to 22 (RR). 2 Transferrin-like domains span residues 25–352 (VQWC…NLRK) and 364–695 (VVWC…NLKK). 2 cysteine pairs are disulfide-bonded: Cys28/Cys64 and Cys38/Cys55. Interaction with PspA stretches follow at residues 39-46 (FQWQRNMR) and 57-58 (KR). Positions 39-49 (FQWQRNMRKVR) are interaction with lipopolysaccharide. The tract at residues 46–51 (RKVRGP) is involved in glycosaminoglycan binding. Asp79 contacts Fe(3+). The active site involves Lys92. Tyr111 is a Fe(3+) binding site. 4 disulfides stabilise this stretch: Cys134/Cys217, Cys176/Cys192, Cys189/Cys200, and Cys250/Cys264. Positions 136, 140, 142, and 143 each coordinate hydrogencarbonate. The N-linked (GlcNAc...) asparagine glycan is linked to Asn156. Tyr211 serves as a coordination point for Fe(3+). Position 272 (His272) interacts with Fe(3+). Residue Ser278 is the Nucleophile of the active site. 2 cysteine pairs are disulfide-bonded: Cys367–Cys399 and Cys377–Cys390. Glycyl lysine isopeptide (Lys-Gly) (interchain with G-Cter in ubiquitin) cross-links involve residues Gln379 and Ser391. Asp414 and Tyr454 together coordinate Fe(3+). 8 cysteine pairs are disulfide-bonded: Cys424/Cys705, Cys446/Cys668, Cys478/Cys553, Cys502/Cys696, Cys512/Cys526, Cys523/Cys536, Cys594/Cys608, and Cys646/Cys651. Thr480, Arg484, Ala486, and Gly487 together coordinate hydrogencarbonate. A glycan (N-linked (GlcNAc...) asparagine) is linked at Asn497. Residue Tyr547 coordinates Fe(3+). Residue His616 participates in Fe(3+) binding. N-linked (GlcNAc...) asparagine glycosylation is present at Asn642.

It belongs to the transferrin family. Monomer. Found in a complex with LTF, CLU, EPPIN and SEMG1. Found in a complex with MPO and LTF; interacts directly with CP, allows Fe(3+) incorporation into LTF and activation of CP ferroxidase activity. Post-translationally, phosphorylation at Ser-10 activates the transcriptional activity. Phosphorylation at Ser-10 also promotes proteasomal degradation. Alternatively can undergo O-GlcNAcylation at Ser-10. In terms of processing, O-GlcNAcylation at Ser-10 inhibits DNA binding and negatively regulates the transcriptional activity. Alternatively can undergo phosphorylation at Ser-10. Poly-N-acetyllactosaminic carbohydrate moiety seems to be needed for TLR4 activation. High levels are found in saliva and tears, intermediate levels in serum and plasma, and low levels in urine. In kidney, detected in the distal collecting tubules in the medulla but not in the cortical region or in blood vessels. Detected in peripheral blood neutrophils (at protein level). Isoform 1 and isoform DeltaLf are expressed in breast, prostate, spleen, pancreas, kidney, small intestine, lung, skeletal muscle, uterus, thymus and fetal liver. Isoform 1 is expressed in brain, testis and peripheral blood leukocytes; isoform DeltaLf is barely detectable in these tissues. Isoform DeltaLf is expressed in placenta, liver and ovary; isoform 1 is barely detectable in these tissues. In kidney, isoform 1 is expressed at high levels in the collecting tubules of the medulla but at very low levels in the cortex.

It is found in the secreted. The protein localises to the cytoplasmic granule. Its subcellular location is the cytoplasm. It localises to the nucleus. In terms of biological role, transferrins are iron binding transport proteins which can bind two Fe(3+) ions in association with the binding of an anion, usually bicarbonate. Its function is as follows. Major iron-binding and multifunctional protein found in exocrine fluids such as breast milk and mucosal secretions. Has antimicrobial activity, which depends on the extracellular cation concentration. Antimicrobial properties include bacteriostasis, which is related to its ability to sequester free iron and thus inhibit microbial growth, as well as direct bactericidal properties leading to the release of lipopolysaccharides from the bacterial outer membrane. Can also prevent bacterial biofilm development in P.aeruginosa infection. Has weak antifungal activity against C.albicans. Has anabolic, differentiating and anti-apoptotic effects on osteoblasts and can also inhibit osteoclastogenesis, possibly playing a role in the regulation of bone growth. Promotes binding of species C adenoviruses to epithelial cells, promoting adenovirus infection. Can inhibit papillomavirus infections. Stimulates the TLR4 signaling pathway leading to NF-kappa-B activation and subsequent pro-inflammatory cytokine production while also interfering with the lipopolysaccharide (LPS)-stimulated TLR4 signaling. Inhibits neutrophil granulocyte migration to sites of apoptosis, when secreted by apoptotic cells. Stimulates VEGFA-mediated endothelial cell migration and proliferation. Binds heparin, chondroitin sulfate and possibly other glycosaminoglycans (GAGs). Also binds specifically to pneumococcal surface protein A (PspA), the lipid A portion of bacterial lipopolysaccharide (LPS), lysozyme and DNA. Lactoferricin binds to the bacterial surface and is crucial for the bactericidal functions. Has some antiviral activity against papillomavirus infection. N-terminal region shows strong antifungal activity against C.albicans. Contains two BBXB heparin-binding consensus sequences that appear to form the predominate functional GAG-binding site. Functionally, has antimicrobial activity and is able to permeabilize different ions through liposomal membranes. In terms of biological role, has opioid antagonist activity. Shows preference for mu-receptor. Its function is as follows. Has opioid antagonist activity. Shows higher degrees of preference for kappa-receptors than for mu-receptors. The lactotransferrin transferrin-like domain 1 functions as a serine protease of the peptidase S60 family that cuts arginine rich regions. This function contributes to the antimicrobial activity. Shows a preferential cleavage at -Arg-Ser-Arg-Arg-|- and -Arg-Arg-Ser-Arg-|-, and of Z-Phe-Arg-|-aminomethylcoumarin sites. Functionally, transcription factor with antiproliferative properties and ability to induce cell cycle arrest. Binds to the DeltaLf response element found in the SKP1, BAX, DCPS, and SELENOH promoters. The chain is Lactotransferrin from Homo sapiens (Human).